The primary structure comprises 305 residues: LVIVGGGPGGLAAAIYAGRAGLTPVIFLGIETSSQLMTTTEVENYPGFKTIQGPDLVQNQVDQAEHCGAQLFYEDVTKIDATARPFKITHGYENEIMTCDALIFATGSTAQRLDVIGEKQFWQKGVSACAVCDSMMAKNKDTVVVGGGDVACEEASYLSNIASKVYLILRRDAFRASAAMVQRVKSNPKIEIIYNSAVQEIKGETRVNQILVKNLKSGDITPLKVEALFWCIGHTPQTRLLKGQVKMSENGYILVENQTQYTNVPGIFAAGDCCDWIYRQAIVAAGSGCKAALDAERWLASNGGH.

Leucine 28 to glutamine 35 lines the FAD pocket. An intrachain disulfide couples cysteine 129 to cysteine 132. Position 272-281 (aspartate 272–alanine 281) interacts with FAD.

Belongs to the class-II pyridine nucleotide-disulfide oxidoreductase family. In terms of assembly, homodimer. FAD is required as a cofactor.

It is found in the cytoplasm. The catalysed reaction is [thioredoxin]-dithiol + NADP(+) = [thioredoxin]-disulfide + NADPH + H(+). The polypeptide is Thioredoxin reductase (TRXB) (Spironucleus barkhanus).